The following is a 690-amino-acid chain: Eukaryotic translation initiation factor 3 subunit B (690 aa).

Positions 1–11 (MAKKKSEEHSG) are enriched in basic and acidic residues. The interval 1–36 (MAKKKSEEHSGADANDSDYTEEPNFDDPPNFVDNIS) is disordered. Acidic residues predominate over residues 15 to 25 (NDSDYTEEPNF). The RRM domain maps to 57-141 (SVVVVDNMPK…YTFAVNLFTD (85 aa)). WD repeat units follow at residues 207-246 (TRERFTDTFVKWSPLGTYVVTFHKPGVAIWGGSSFQKIQK), 292-331 (GDGMSVLSMFRWSHDDKFVARMGENSIHIYETPSFYLLDL), 334-369 (IKIPGIRGFSWSPTDNVIAYWVEEQNQIPARVTLME), 442-484 (EIRE…KPSL), and 530-575 (PDHF…IRRT). Residues 614–645 (QKDRLRLTRASKELLEKRSQLRETFMEYRNKR) adopt a coiled-coil conformation.

Belongs to the eIF-3 subunit B family. Component of the eukaryotic translation initiation factor 3 (eIF-3) complex. The eIF-3 complex interacts with pix. Interacts with mxt.

It localises to the cytoplasm. In terms of biological role, RNA-binding component of the eukaryotic translation initiation factor 3 (eIF-3) complex, which is involved in protein synthesis of a specialized repertoire of mRNAs and, together with other initiation factors, stimulates binding of mRNA and methionyl-tRNAi to the 40S ribosome. The eIF-3 complex specifically targets and initiates translation of a subset of mRNAs involved in cell proliferation. The protein is Eukaryotic translation initiation factor 3 subunit B of Drosophila virilis (Fruit fly).